Consider the following 118-residue polypeptide: Small ribosomal subunit protein uS13 (118 aa).

The segment at 92–118 is disordered; that stretch reads RRSLPVRGQRTKTNARTRKGPRKPIKK.

The protein belongs to the universal ribosomal protein uS13 family. Part of the 30S ribosomal subunit. Forms a loose heterodimer with protein S19. Forms two bridges to the 50S subunit in the 70S ribosome.

Its function is as follows. Located at the top of the head of the 30S subunit, it contacts several helices of the 16S rRNA. In the 70S ribosome it contacts the 23S rRNA (bridge B1a) and protein L5 of the 50S subunit (bridge B1b), connecting the 2 subunits; these bridges are implicated in subunit movement. Contacts the tRNAs in the A and P-sites. The protein is Small ribosomal subunit protein uS13 of Acinetobacter baumannii (strain AB307-0294).